The primary structure comprises 779 residues: Phosphoribosylformylglycinamidine synthase subunit PurL (779 aa).

The active site involves H52. Residues Y55 and K94 each contribute to the ATP site. Mg(2+) is bound at residue E96. Residues 97 to 100 (SHNH) and R119 contribute to the substrate site. The active-site Proton acceptor is H98. D120 serves as a coordination point for Mg(2+). Residue Q243 coordinates substrate. D271 lines the Mg(2+) pocket. 315–317 (ESQ) serves as a coordination point for substrate. ATP-binding residues include N523 and G560. N561 contacts Mg(2+). Residue S563 coordinates substrate.

The protein belongs to the FGAMS family. Monomer. Part of the FGAM synthase complex composed of 1 PurL, 1 PurQ and 2 PurS subunits.

The protein localises to the cytoplasm. It carries out the reaction N(2)-formyl-N(1)-(5-phospho-beta-D-ribosyl)glycinamide + L-glutamine + ATP + H2O = 2-formamido-N(1)-(5-O-phospho-beta-D-ribosyl)acetamidine + L-glutamate + ADP + phosphate + H(+). The protein operates within purine metabolism; IMP biosynthesis via de novo pathway; 5-amino-1-(5-phospho-D-ribosyl)imidazole from N(2)-formyl-N(1)-(5-phospho-D-ribosyl)glycinamide: step 1/2. Part of the phosphoribosylformylglycinamidine synthase complex involved in the purines biosynthetic pathway. Catalyzes the ATP-dependent conversion of formylglycinamide ribonucleotide (FGAR) and glutamine to yield formylglycinamidine ribonucleotide (FGAM) and glutamate. The FGAM synthase complex is composed of three subunits. PurQ produces an ammonia molecule by converting glutamine to glutamate. PurL transfers the ammonia molecule to FGAR to form FGAM in an ATP-dependent manner. PurS interacts with PurQ and PurL and is thought to assist in the transfer of the ammonia molecule from PurQ to PurL. The sequence is that of Phosphoribosylformylglycinamidine synthase subunit PurL from Prochlorococcus marinus (strain AS9601).